A 364-amino-acid polypeptide reads, in one-letter code: Spermidine/putrescine import ATP-binding protein PotA (364 aa).

Positions Leu5–Ile235 constitute an ABC transporter domain. Gly37–Thr44 is an ATP binding site.

Belongs to the ABC transporter superfamily. Spermidine/putrescine importer (TC 3.A.1.11.1) family. In terms of assembly, the complex is composed of two ATP-binding proteins (PotA), two transmembrane proteins (PotB and PotC) and a solute-binding protein (PotD).

The protein localises to the cell membrane. It carries out the reaction ATP + H2O + polyamine-[polyamine-binding protein]Side 1 = ADP + phosphate + polyamineSide 2 + [polyamine-binding protein]Side 1.. Part of the ABC transporter complex PotABCD involved in spermidine/putrescine import. Responsible for energy coupling to the transport system. In Staphylococcus epidermidis (strain ATCC 35984 / DSM 28319 / BCRC 17069 / CCUG 31568 / BM 3577 / RP62A), this protein is Spermidine/putrescine import ATP-binding protein PotA.